Reading from the N-terminus, the 265-residue chain is C-type lectin domain family 12 member A (265 aa).

The Cytoplasmic segment spans residues 1–43 (MSEEVTYADLQFQNSSEMEKIPEIGKFGEKAPPAPSHVWRPAA). Residues 5 to 10 (VTYADL) carry the ITIM motif motif. Position 7 is a phosphotyrosine (Tyr-7). The helical; Signal-anchor for type II membrane protein transmembrane segment at 44–64 (LFLTLLCLLLLIGLGVLASMF) threads the bilayer. Topologically, residues 65-265 (HVTLKIEMKK…QLGSTYFREA (201 aa)) are extracellular. 2 N-linked (GlcNAc...) asparagine glycosylation sites follow: Asn-88 and Asn-98. 4 cysteine pairs are disulfide-bonded: Cys-118–Cys-130, Cys-133–Cys-144, Cys-161–Cys-248, and Cys-227–Cys-240. In terms of domain architecture, C-type lectin spans 140 to 249 (HKDSCYFLSD…CTYKKRMICE (110 aa)). The N-linked (GlcNAc...) asparagine glycan is linked to Asn-165.

As to quaternary structure, homodimer; disulfide-linked. Interacts (when the ITIM motif is phosphorylated) with PTPN6 and PTPN11. Post-translationally, phosphorylated at Tyr-7 by SRC in the ITIM motif following ligand-binding, promoting recruitment of tyrosine-protein phosphatases PTPN6 and PTPN11. Highly N-glycosylated; glycosylation varies between cell types. In terms of tissue distribution, preferentially expressed in lymphoid tissues and immune cells, including natural killer (NK) cells, T-cells, dendritic cells and monocytes or macrophages. Detected in spleen macrophage-rich red pulp and in lymph node (at protein level). Detected in peripheral blood leukocytes, dendritic cells, bone marrow, monocytes, mononuclear leukocytes and macrophages.

Its subcellular location is the cell membrane. Its function is as follows. Myeloid inhibitory C-type lectin receptor that acts as a negative regulator of myeloid cell activation. Myeloid cell inhibition is required to limit proinflammatory pathways and protect against excessive inflammation. Specifically recognizes and binds various structures, such as neutrophil extracellular traps (NETs) or monosodium urate crystals. Also acts as a pattern-recognition receptor for pathogen-associated molecules, such as plasmodium hemozoin or mycobacterial micolic acid. Ligand-binding induces phosphorylation of its ITIM motif, followed by recruitment of tyrosine-protein phosphatases PTPN6 and PTPN11, which counteract tyrosine-protein kinase SYK, thereby preventing myeloid cell activation. Acts as a pattern-recognition receptor for NETs in neutrophils: specifically recognizes DNA in NETs, leading to inhibit neutrophil activation and limit further NET formation. This regulation is essential for controlling key neutrophil responses and limit NET-mediated inflammatory conditions. Also recognizes dead cells by acting as a receptor for monosodium urate crystals, leading to down-regulate neutrophil activation. Binding to monosodium urate crystals also promotes the type I interferon response. Acts as an inhibitor of natural killer (NK) cell cytotoxicity. Also acts as an ihibitor of dendritic cell maturation in an IL10-dependent manner. The sequence is that of C-type lectin domain family 12 member A from Homo sapiens (Human).